A 582-amino-acid chain; its full sequence is MVFFPEAMPLVTLSERMVPQVNTSPFAPAQSSSPLPSNSCREYSLPSHPSTHNSSVAYVDSQDNKPPLVSTLHFSLAPSLSPSSAQSHNTALITEPLTSFIGGTSQYPSASFSTSQHPSQVYNDGSTLNSNNTTQQLNNNNGFQPPPQNPGISKSRIAQYHQPSQTYDDTVDSSFYDWYKAGAQHNLAPPQSSHTEASQGYMYSTNTAHDATDIPSSFNFYNTQASTAPNPQEINYQWSHEYRPHTQYQNNLLRAQPNVNCENFPTTVPNYPFQQPSYNPNALVPSYTTLVSQLPPSPCLTVSSGPLSTASSIPSNCSCPSVKSSGPSYHAEQEVNVNSYNGGIPSTSYNDTPQQSVTGSYNSGETMSTYLNQTNTSGRSPNSMEATEQIGTIGTDGSMKRRKRRQPSNRKTSVPRSPGGKSFVCPECSKKFKRSEHLRRHIRSLHTSEKPFVCICGKRFSRRDNLRQHERLHVNASPRLACFFQPSGYYSSGAPGAPVQPQKPIEDLNKIPINQGMDSSQIENTNLMLSSQRPLSQQIVPEIAAYPNSIRPELLSKLPVQTPNQKMPLMNPMHQYQPYPSS.

Disordered stretches follow at residues 24 to 55 (SPFA…HNSS), 107 to 154 (YPSA…GISK), 347 to 366 (TSYN…SGET), and 375 to 422 (NTSG…GGKS). Residues 107 to 125 (YPSASFSTSQHPSQVYNDG) are compositionally biased toward polar residues. Positions 126–143 (STLNSNNTTQQLNNNNGF) are enriched in low complexity. The segment covering 375-392 (NTSGRSPNSMEATEQIGT) has biased composition (polar residues). Residues 423–446 (FVCPECSKKFKRSEHLRRHIRSLH) form a C2H2-type 1 zinc finger. The C2H2-type 2; atypical zinc finger occupies 452-473 (FVCICGKRFSRRDNLRQHERLH).

It is found in the nucleus. Transcription factor that globally supports gene expression in response to hydrogen peroxide. The protein is Hydrogen peroxide stress regulator 1 (hsr1) of Schizosaccharomyces pombe (strain 972 / ATCC 24843) (Fission yeast).